The chain runs to 737 residues: Catalase-peroxidase (737 aa).

The tract at residues 1-32 (MSKENMSNEGKCPFNHGAAGTNQSSGRGTSNK) is disordered. Residues 20–32 (GTNQSSGRGTSNK) are compositionally biased toward polar residues. The tryptophyl-tyrosyl-methioninium (Trp-Tyr) (with M-252) cross-link spans 103-226 (WHSAGTYRTA…LAAVQMGLIY (124 aa)). Histidine 104 (proton acceptor) is an active-site residue. The tryptophyl-tyrosyl-methioninium (Tyr-Met) (with W-103) cross-link spans 226 to 252 (YVNPEGPEGKPDTLASARDIRDTFGRM). Histidine 267 is a binding site for heme b.

Belongs to the peroxidase family. Peroxidase/catalase subfamily. Homodimer or homotetramer. Requires heme b as cofactor. In terms of processing, formation of the three residue Trp-Tyr-Met cross-link is important for the catalase, but not the peroxidase activity of the enzyme.

The enzyme catalyses H2O2 + AH2 = A + 2 H2O. The catalysed reaction is 2 H2O2 = O2 + 2 H2O. Its function is as follows. Bifunctional enzyme with both catalase and broad-spectrum peroxidase activity. In Marinomonas sp. (strain MWYL1), this protein is Catalase-peroxidase.